We begin with the raw amino-acid sequence, 285 residues long: Probable fructose-bisphosphate aldolase (285 aa).

Ser50 contributes to the D-glyceraldehyde 3-phosphate binding site. Residue Asp85 is the Proton donor of the active site. Zn(2+) contacts are provided by His86, Asp107, Glu137, and His181. Gly182 is a dihydroxyacetone phosphate binding site. His209 is a Zn(2+) binding site. Dihydroxyacetone phosphate is bound by residues 210-212 (GGT) and 231-234 (NVNT). Thr212 and Thr234 each carry phosphothreonine.

Belongs to the class II fructose-bisphosphate aldolase family. Requires Zn(2+) as cofactor. In terms of processing, phosphorylated during sporulation.

It catalyses the reaction beta-D-fructose 1,6-bisphosphate = D-glyceraldehyde 3-phosphate + dihydroxyacetone phosphate. The protein operates within carbohydrate degradation; glycolysis; D-glyceraldehyde 3-phosphate and glycerone phosphate from D-glucose: step 4/4. Catalyzes the aldol condensation of dihydroxyacetone phosphate (DHAP or glycerone-phosphate) with glyceraldehyde 3-phosphate (G3P) to form fructose 1,6-bisphosphate (FBP) in gluconeogenesis and the reverse reaction in glycolysis. This is Probable fructose-bisphosphate aldolase (fbaA) from Bacillus subtilis (strain 168).